We begin with the raw amino-acid sequence, 407 residues long: GTPase Obg (407 aa).

The Obg domain occupies 1-159; that stretch reads MKFVDEVSIR…RDLKLELKVL (159 aa). The tract at residues 127–149 is disordered; sequence NTRFKSSTNRAPRQTTPGKPGDQ. Over residues 129 to 143 the composition is skewed to polar residues; it reads RFKSSTNRAPRQTTP. The OBG-type G domain occupies 160–333; sequence ADVGLLGLPN…LTRDIMRYLE (174 aa). GTP is bound by residues 166 to 173, 191 to 195, 213 to 216, 283 to 286, and 314 to 316; these read GLPNAGKS, FTTLV, DIPG, NKCD, and SAI. Positions 173 and 193 each coordinate Mg(2+). The disordered stretch occupies residues 376–407; sequence SGVKSVHDIGDDDWDEEDVDDEDGPEIIYVRD. Positions 385 to 400 are enriched in acidic residues; sequence GDDDWDEEDVDDEDGP.

It belongs to the TRAFAC class OBG-HflX-like GTPase superfamily. OBG GTPase family. In terms of assembly, monomer. It depends on Mg(2+) as a cofactor.

The protein resides in the cytoplasm. In terms of biological role, an essential GTPase which binds GTP, GDP and possibly (p)ppGpp with moderate affinity, with high nucleotide exchange rates and a fairly low GTP hydrolysis rate. Plays a role in control of the cell cycle, stress response, ribosome biogenesis and in those bacteria that undergo differentiation, in morphogenesis control. The protein is GTPase Obg of Pseudomonas savastanoi pv. phaseolicola (strain 1448A / Race 6) (Pseudomonas syringae pv. phaseolicola (strain 1448A / Race 6)).